We begin with the raw amino-acid sequence, 583 residues long: Pyruvate kinase isozyme A, chloroplastic (583 aa).

A chloroplast-targeting transit peptide spans 1–74 (MSQSLHFSPN…NSGVLYNNNN (74 aa)). The span at 43 to 52 (KASTSPSSSS) shows a compositional bias: low complexity. Positions 43-75 (KASTSPSSSSDPQVLVADNGTGNSGVLYNNNNK) are disordered. Residues 62–75 (GTGNSGVLYNNNNK) are compositionally biased toward polar residues. Arginine 134 contributes to the substrate binding site. Positions 136, 168, and 169 each coordinate K(+). ATP is bound at residue 136–139 (NMCH). Glutamate 333 lines the Mg(2+) pocket. Residues glycine 356, aspartate 357, and serine 389 each coordinate substrate. Aspartate 357 contacts Mg(2+).

It belongs to the pyruvate kinase family. In terms of assembly, oligomer of alpha and beta subunits. The cofactor is Mg(2+). K(+) serves as cofactor.

It localises to the plastid. Its subcellular location is the chloroplast. The enzyme catalyses pyruvate + ATP = phosphoenolpyruvate + ADP + H(+). Its pathway is carbohydrate degradation; glycolysis; pyruvate from D-glyceraldehyde 3-phosphate: step 5/5. The sequence is that of Pyruvate kinase isozyme A, chloroplastic from Ricinus communis (Castor bean).